The sequence spans 196 residues: Probable GTP-binding protein EngB (196 aa).

An EngB-type G domain is found at 24–196 (ELSEVALSGR…IWNLIEPYIS (173 aa)). GTP contacts are provided by residues 32–39 (GRSNVGKS), 59–63 (GKTQT), 77–80 (DVPG), 144–147 (TKED), and 176–178 (YSS). 2 residues coordinate Mg(2+): serine 39 and threonine 61.

It belongs to the TRAFAC class TrmE-Era-EngA-EngB-Septin-like GTPase superfamily. EngB GTPase family. The cofactor is Mg(2+).

In terms of biological role, necessary for normal cell division and for the maintenance of normal septation. The chain is Probable GTP-binding protein EngB from Staphylococcus aureus (strain MRSA252).